The following is a 511-amino-acid chain: Maturase K (511 aa).

The protein belongs to the intron maturase 2 family. MatK subfamily.

It localises to the plastid. It is found in the chloroplast. Usually encoded in the trnK tRNA gene intron. Probably assists in splicing its own and other chloroplast group II introns. The chain is Maturase K from Anchomanes difformis (Amorphophallus difformis).